Reading from the N-terminus, the 765-residue chain is Leucine-rich repeat and calponin homology domain-containing protein 2 (765 aa).

Disordered stretches follow at residues 1–39 and 55–76; these read MAAS…GGGG and LFGQ…PQHT. 9 LRR repeats span residues 89–110, 112–133, 135–156, 158–179, 180–201, 203–224, 226–248, 249–269, and 271–292; these read SSGI…GYDL, DTTQ…VWLF, PLET…IKNL, MLTY…LFDL, PLKV…IGKL, DLME…MGKL, SLRE…GDLP, LVKL…YRKL, and HLQV…ICLK. The tract at residues 316–401 is disordered; it reads LDLPSLSKRM…GSKTDSQKDQ (86 aa). The segment covering 378 to 388 has biased composition (basic and acidic residues); sequence SNREQTSRNDS. Positions 438–472 form a coiled coil; the sequence is SEKSRKNEELGDEKRLEKEQLLAEEEDDDLKEVTD. Disordered regions lie at residues 498 to 552 and 565 to 628; these read RNKP…QSEE and KYKS…EYGA. A compositionally biased stretch (basic and acidic residues) spans 503–512; sequence QTVECEKSVS. Composition is skewed to polar residues over residues 518–529 and 584–595; these read SPLSPLTWQPLE and DNANMSTQSPVS. Positions 642–755 constitute a Calponin-homology (CH) domain; sequence LREEREQIRQ…VTVQALLELP (114 aa).

May play a role in the organization of the cytoskeleton. The polypeptide is Leucine-rich repeat and calponin homology domain-containing protein 2 (LRCH2) (Homo sapiens (Human)).